Consider the following 84-residue polypeptide: Small ribosomal subunit protein bS20 (84 aa).

The protein belongs to the bacterial ribosomal protein bS20 family.

In terms of biological role, binds directly to 16S ribosomal RNA. The protein is Small ribosomal subunit protein bS20 of Limosilactobacillus fermentum (strain NBRC 3956 / LMG 18251) (Lactobacillus fermentum).